The sequence spans 445 residues: Phosphoglucosamine mutase (445 aa).

Serine 102 serves as the catalytic Phosphoserine intermediate. 4 residues coordinate Mg(2+): serine 102, aspartate 240, aspartate 242, and aspartate 244. Serine 102 carries the post-translational modification Phosphoserine.

The protein belongs to the phosphohexose mutase family. Requires Mg(2+) as cofactor. Post-translationally, activated by phosphorylation.

It catalyses the reaction alpha-D-glucosamine 1-phosphate = D-glucosamine 6-phosphate. Functionally, catalyzes the conversion of glucosamine-6-phosphate to glucosamine-1-phosphate. This is Phosphoglucosamine mutase from Mycobacterium sp. (strain JLS).